A 332-amino-acid polypeptide reads, in one-letter code: Beta-hexosaminidase (332 aa).

Residues Asp-62, Arg-70, Arg-131, and 161 to 162 (KH) contribute to the substrate site. His-174 (proton donor/acceptor) is an active-site residue. The active-site Nucleophile is the Asp-244.

It belongs to the glycosyl hydrolase 3 family. NagZ subfamily.

The protein resides in the cytoplasm. The enzyme catalyses Hydrolysis of terminal non-reducing N-acetyl-D-hexosamine residues in N-acetyl-beta-D-hexosaminides.. The protein operates within cell wall biogenesis; peptidoglycan recycling. In terms of biological role, plays a role in peptidoglycan recycling by cleaving the terminal beta-1,4-linked N-acetylglucosamine (GlcNAc) from peptide-linked peptidoglycan fragments, giving rise to free GlcNAc, anhydro-N-acetylmuramic acid and anhydro-N-acetylmuramic acid-linked peptides. The polypeptide is Beta-hexosaminidase (Pseudomonas aeruginosa (strain LESB58)).